The primary structure comprises 581 residues: uncharacterized protein (581 aa).

This sequence belongs to the UbiD family.

This is an uncharacterized protein from Chlamydia caviae (strain ATCC VR-813 / DSM 19441 / 03DC25 / GPIC) (Chlamydophila caviae).